The chain runs to 165 residues: (2E)-enoyl-[ACP] glycyltransferase (165 aa).

The protein belongs to the FcoT family.

The catalysed reaction is a (3R)-3-[(carboxymethyl)amino]fatty acid + holo-[ACP] + H(+) = a (2E)-enoyl-[ACP] + glycine + H2O. The enzyme catalyses (3R)-3-[(carboxymethyl)amino]butanoate + holo-[ACP] + H(+) = (2E)-butenoyl-[ACP] + glycine + H2O. Involved in the biosynthesis of a unique class of isonitrile lipopeptides (INLPs). Catalyzes a Michael addition of glycine to the beta-position of an alpha,beta-unsaturated fatty acyl-[ACP], producing a (3R)-3-[(carboxymethyl)amino]fatty acid. Acts on the (2E)-butenoyl moiety loaded on the acyl-carrier protein ScoB, forming the product (3R)-3-[(carboxymethyl)amino]butanoate released from ScoB. In Streptomyces coeruleorubidus, this protein is (2E)-enoyl-[ACP] glycyltransferase.